We begin with the raw amino-acid sequence, 662 residues long: MASPRAVQLSLRKPTHAVCVVGVETLVNVYSDVPKGAKTFGVSGSSEVKIYMVYDPSRVAEPAGWAHWPLDANVDVVVVADTVSKDLYDFKVKVSYFESQEAAALAHSVLYLTAVDVSLDVDTGRTGKVKKGSGDKKTWRWGPGGSGAILLVNCDRDIHGSREDLHANHLKSLEDLQDMSPMVLSCGGPDELFESHKLVLKASLSDSRRLKVFCARGGTSLSNYKQVLGPRHSSYEVERHSGERAIQFYVEGLAFPDASFSGLLSLSVSLVDTRPLSEVSVFTDSVTFRVAPWIMTPNTQPPLELYVCSVTDIHGRNDKFLEDMSHLATKANCKLVVCPRAENRNDRWIQDELEFGYIDAPHKSFPVVFDSPRNRGLRDFALKRILGPDFGYVTREIEFAGASGLDSFGNLDVSPPVRVGNTDYPLGRILIGGSFPKPSGRRMARVVRDFLQAQQVQSPVELYSDWLSVGHVDEFLSFVPTSDQKGFRLLLASPSACLQLFQEKKEEGYGEAEQFDGLKHKAKRSINDILADKHLRRDSAHVQKCIDWNREVLKRELGLSESDIVDIPQLFFLKGAYAEAFFPDMVNMVVLGKYLGIPKPFGPLINGRCCLEEKVRSLLEPLGLRCVFIDDFLFYHQLLGEIHCGTNVRRKPFTFKWWNSVP.

Positions 153, 155, 157, 164, 175, 178, 350, 352, 363, 370, 371, 374, 408, and 411 each coordinate Ca(2+). Cys-644 functions as the Nucleophile in the catalytic mechanism.

It belongs to the protein arginine deiminase family. Monomer. Ca(2+) is required as a cofactor. Expressed only in the epidermis and uterus.

It is found in the cytoplasm. It catalyses the reaction L-arginyl-[protein] + H2O = L-citrullyl-[protein] + NH4(+). Its function is as follows. Catalyzes the deimination of arginine residues of proteins. This is Protein-arginine deiminase type-1 (Padi1) from Mus musculus (Mouse).